The primary structure comprises 400 residues: Nicotinate phosphoribosyltransferase (400 aa).

Residue His-220 is modified to Phosphohistidine; by autocatalysis.

The protein belongs to the NAPRTase family. In terms of processing, transiently phosphorylated on a His residue during the reaction cycle. Phosphorylation strongly increases the affinity for substrates and increases the rate of nicotinate D-ribonucleotide production. Dephosphorylation regenerates the low-affinity form of the enzyme, leading to product release.

The catalysed reaction is nicotinate + 5-phospho-alpha-D-ribose 1-diphosphate + ATP + H2O = nicotinate beta-D-ribonucleotide + ADP + phosphate + diphosphate. The protein operates within cofactor biosynthesis; NAD(+) biosynthesis; nicotinate D-ribonucleotide from nicotinate: step 1/1. Functionally, catalyzes the synthesis of beta-nicotinate D-ribonucleotide from nicotinate and 5-phospho-D-ribose 1-phosphate at the expense of ATP. This is Nicotinate phosphoribosyltransferase from Escherichia coli O17:K52:H18 (strain UMN026 / ExPEC).